A 157-amino-acid polypeptide reads, in one-letter code: Crossover junction endodeoxyribonuclease RuvC (157 aa).

Active-site residues include Asp-7, Glu-67, and Asp-140. Asp-7, Glu-67, and Asp-140 together coordinate Mg(2+).

Belongs to the RuvC family. In terms of assembly, homodimer which binds Holliday junction (HJ) DNA. The HJ becomes 2-fold symmetrical on binding to RuvC with unstacked arms; it has a different conformation from HJ DNA in complex with RuvA. In the full resolvosome a probable DNA-RuvA(4)-RuvB(12)-RuvC(2) complex forms which resolves the HJ. Mg(2+) serves as cofactor.

Its subcellular location is the cytoplasm. It catalyses the reaction Endonucleolytic cleavage at a junction such as a reciprocal single-stranded crossover between two homologous DNA duplexes (Holliday junction).. In terms of biological role, the RuvA-RuvB-RuvC complex processes Holliday junction (HJ) DNA during genetic recombination and DNA repair. Endonuclease that resolves HJ intermediates. Cleaves cruciform DNA by making single-stranded nicks across the HJ at symmetrical positions within the homologous arms, yielding a 5'-phosphate and a 3'-hydroxyl group; requires a central core of homology in the junction. The consensus cleavage sequence is 5'-(A/T)TT(C/G)-3'. Cleavage occurs on the 3'-side of the TT dinucleotide at the point of strand exchange. HJ branch migration catalyzed by RuvA-RuvB allows RuvC to scan DNA until it finds its consensus sequence, where it cleaves and resolves the cruciform DNA. The polypeptide is Crossover junction endodeoxyribonuclease RuvC (Thermosipho melanesiensis (strain DSM 12029 / CIP 104789 / BI429)).